The following is a 419-amino-acid chain: Protein FAM217A (419 aa).

Disordered stretches follow at residues 1–23 (MGRK…QENL), 100–119 (DKRN…LSES), 234–298 (PSSS…SRSL), and 362–388 (PIPL…HRKS). Over residues 7–23 (ESCSANPHSSSISQENL) the composition is skewed to polar residues. Residues 284-298 (SLSTAGKSKSNSRSL) are compositionally biased toward polar residues. Residues 378–388 (PRTKKKCHRKS) are compositionally biased toward basic residues.

This sequence belongs to the FAM217 family.

This chain is Protein FAM217A (Fam217a), found in Rattus norvegicus (Rat).